A 763-amino-acid polypeptide reads, in one-letter code: Phosphoglycerol transferase I (763 aa).

4 helical membrane passes run 1-21 (MSEL…AWKA), 26-46 (WWFA…ITLF), 77-97 (ILPG…LGWI), and 108-128 (FGYS…SPAF).

This sequence belongs to the OpgB family.

Its subcellular location is the cell inner membrane. The enzyme catalyses a phosphatidylglycerol + a membrane-derived-oligosaccharide D-glucose = a 1,2-diacyl-sn-glycerol + a membrane-derived-oligosaccharide 6-(glycerophospho)-D-glucose.. Its pathway is glycan metabolism; osmoregulated periplasmic glucan (OPG) biosynthesis. Its function is as follows. Transfers a phosphoglycerol residue from phosphatidylglycerol to the membrane-bound nascent glucan backbones. The protein is Phosphoglycerol transferase I of Escherichia coli O127:H6 (strain E2348/69 / EPEC).